The following is a 309-amino-acid chain: Sulfate adenylyltransferase subunit 2 (309 aa).

It belongs to the PAPS reductase family. CysD subfamily. As to quaternary structure, heterodimer composed of CysD, the smaller subunit, and CysN.

It catalyses the reaction sulfate + ATP + H(+) = adenosine 5'-phosphosulfate + diphosphate. The protein operates within sulfur metabolism; hydrogen sulfide biosynthesis; sulfite from sulfate: step 1/3. In terms of biological role, with CysN forms the ATP sulfurylase (ATPS) that catalyzes the adenylation of sulfate producing adenosine 5'-phosphosulfate (APS) and diphosphate, the first enzymatic step in sulfur assimilation pathway. APS synthesis involves the formation of a high-energy phosphoric-sulfuric acid anhydride bond driven by GTP hydrolysis by CysN coupled to ATP hydrolysis by CysD. The sequence is that of Sulfate adenylyltransferase subunit 2 from Mycobacterium sp. (strain KMS).